The primary structure comprises 496 residues: Glycine receptor subunit beta (496 aa).

Residues 1-22 form the signal peptide; that stretch reads MKFSLAISFFILMSLLFEDACA. Topologically, residues 23 to 268 are extracellular; it reads KEKSSKKGKG…IFTLRRQVGF (246 aa). Residues 32–53 are disordered; it reads GKKKQYLCPSQQSPEDLARVPP. Residue Asn54 is glycosylated (N-linked (GlcNAc...) asparagine). Glycine-binding residues include Arg108 and Ser174. An intrachain disulfide couples Cys183 to Cys197. Residue Asn242 is glycosylated (N-linked (GlcNAc...) asparagine). An intrachain disulfide couples Cys243 to Cys255. Position 250 (Thr250) interacts with glycine. A helical transmembrane segment spans residues 269 to 289; it reads YMMGVYAPTLLIVVLSWLSFW. The Cytoplasmic portion of the chain corresponds to 290 to 294; it reads INPDA. Residues 295–315 traverse the membrane as a helical segment; the sequence is SAARVPLGIFSVLSLASECTT. The Extracellular segment spans residues 316–327; it reads LAAELPKVSYVK. The helical transmembrane segment at 328 to 349 threads the bilayer; the sequence is ALDVWLIACLLFGFASLVEYAV. Residues 350–471 are Cytoplasmic-facing; sequence VQVMLNNPKR…KPVIPTAAKR (122 aa). Thr391 carries the post-translational modification Phosphothreonine. The helical transmembrane segment at 472 to 495 threads the bilayer; it reads IDLYARALFPFCFLFFNVIYWSIY. Position 496 (Leu496) is a topological domain, extracellular.

This sequence belongs to the ligand-gated ion channel (TC 1.A.9) family. Glycine receptor (TC 1.A.9.3) subfamily. GLRB sub-subfamily. In terms of assembly, forms heteropentamers with glycin receptor alpha subunits. Heteropentamers with GLRA1 can be composed of two GLRA1 and three GLRB subunits, or three GLRA1 and two GLRB subunits, or four GLRA1 subunits and one GLRB subunit. Forms heteropentamers with GLRA2. Functional GLRB-GLRA2 heteropentamers contain four GLRA2 subunits and one GLRB subunit, although alternative subunit composition cannot be excluded. Forms a heteropentamer with GLRA3. Interacts with GPHN. In terms of tissue distribution, detected in spinal cord, brain and brain stem, especially in the periolivary region, spinal nuclei, trigeminal nucleus, medulla oblongata, pons and midbrain. Detected in the inner plexiform layer of the retina (at protein level). High levels of expression in cortex, hippocampus, thalamus and cerebellum. Detected in spinal cord.

It localises to the postsynaptic cell membrane. It is found in the synapse. The protein resides in the cell projection. The protein localises to the dendrite. Its subcellular location is the cell membrane. It localises to the cytoplasm. It carries out the reaction chloride(in) = chloride(out). Its activity is regulated as follows. Channel opening is triggered by extracellular glycine. Heteropentameric channels composed of GLRB and GLRA1 are activated by lower glycine levels than homopentameric GLRA1. Functionally, subunit of heteromeric glycine-gated chloride channels. Plays an important role in the down-regulation of neuronal excitability. Contributes to the generation of inhibitory postsynaptic currents. The polypeptide is Glycine receptor subunit beta (Glrb) (Mus musculus (Mouse)).